A 344-amino-acid chain; its full sequence is Beta-1,4-galactosyltransferase 4 (344 aa).

At 1 to 12 the chain is on the cytoplasmic side; sequence MGFNLTFHLSYK. A helical; Signal-anchor for type II membrane protein transmembrane segment spans residues 13-38; it reads FRLLLLLTLCLTVVGWATSNYFVGAI. The Lumenal segment spans residues 39-344; the sequence is QEIPKAKEFM…NITVDFWFGA (306 aa). The cysteines at positions 77 and 118 are disulfide-linked. UDP-alpha-D-galactose is bound by residues 129–133, 168–170, and 195–196; these read PHRNR, FNR, and VD. Cysteines 189 and 208 form a disulfide. Aspartate 196 provides a ligand contact to Mn(2+). N-linked (GlcNAc...) asparagine glycosylation is present at asparagine 220. Residues tyrosine 224 and tryptophan 256 each coordinate UDP-alpha-D-galactose. 258-261 is an N-acetyl-D-glucosamine binding site; the sequence is GEDD. Histidine 289 is a Mn(2+) binding site. UDP-alpha-D-galactose is bound at residue 289-291; sequence HTR. Arginine 301 is a binding site for N-acetyl-D-glucosamine. N-linked (GlcNAc...) asparagine glycosylation occurs at asparagine 335.

Belongs to the glycosyltransferase 7 family. As to quaternary structure, interacts with SLC35A2 (isoform 2; UGT1). Mn(2+) is required as a cofactor. N-glycosylated. As to expression, highest expression is observed in placenta, pancreas, kidney and heart. Expressed in corneal epithelial cells.

It is found in the golgi apparatus membrane. The protein localises to the secreted. It carries out the reaction N-acetyl-D-glucosamine + UDP-alpha-D-galactose = beta-D-galactosyl-(1-&gt;4)-N-acetyl-D-glucosamine + UDP + H(+). The enzyme catalyses a beta-D-GlcNAc-(1-&gt;3)-beta-D-Gal-(1-&gt;4)-beta-D-Glc-(1&lt;-&gt;1)-Cer(d18:1(4E)) + UDP-alpha-D-galactose = a neolactoside nLc4Cer(d18:1(4E)) + UDP + H(+). It catalyses the reaction 3-O-{beta-D-galactosyl-(1-&gt;3)-[6-O-sulfo-N-acetyl-beta-D-glucosaminyl-(1-&gt;6)]-N-acetyl-alpha-D-galactosaminyl}-L-seryl-[protein] + UDP-alpha-D-galactose = 3-O-{beta-D-galactosyl-(1-&gt;3)-[beta-D-galactosyl-(1-&gt;4)-6-O-sulfo-N-acetyl-beta-D-glucosaminyl-(1-&gt;6)]-N-acetyl-alpha-D-galactosaminyl}-L-seryl-[protein] + UDP + H(+). The catalysed reaction is 3-O-{beta-D-galactosyl-(1-&gt;3)-[6-O-sulfo-N-acetyl-beta-D-glucosaminyl-(1-&gt;6)]-N-acetyl-alpha-D-galactosaminyl}-L-threonyl-[protein] + UDP-alpha-D-galactose = 3-O-{beta-D-galactosyl-(1-&gt;3)-[beta-D-galactosyl-(1-&gt;4)-6-O-sulfo-N-acetyl-beta-D-glucosaminyl-(1-&gt;6)]-N-acetyl-alpha-D-galactosaminyl}-L-threonyl-[protein] + UDP + H(+). It functions in the pathway protein modification; protein glycosylation. The protein operates within glycolipid biosynthesis. Up-regulated by LALBA. Functionally, galactose (Gal) transferase involved in the synthesis of terminal N-acetyllactosamine (LacNac) unit present on glycan chains of glycoproteins and glycosphingolipids. Catalyzes the transfer of Gal residue via a beta1-&gt;4 linkage from UDP-Gal to the non-reducing terminal N-acetyl glucosamine 6-O-sulfate (6-O-sulfoGlcNAc) in the linearly growing chain of both N- and O-linked keratan sulfate proteoglycans. Cooperates with B3GNT7 N-acetyl glucosamine transferase and CHST6 and CHST1 sulfotransferases to construct and elongate mono- and disulfated disaccharide units [-&gt;3Galbeta1-&gt;4(6-sulfoGlcNAcbeta)1-&gt;] and [-&gt;3(6-sulfoGalbeta)1-&gt;4(6-sulfoGlcNAcbeta)1-&gt;] within keratan sulfate polymer. Transfers Gal residue via a beta1-&gt;4 linkage to terminal 6-O-sulfoGlcNAc within the LacNac unit of core 2 O-glycans forming 6-sulfo-sialyl-Lewis X (sLex). May contribute to the generation of sLex epitope on mucin-type glycoproteins that serve as ligands for SELL/L-selectin, a major regulator of leukocyte migration. In the biosynthesis pathway of neolacto-series glycosphingolipids, transfers Gal residue via a beta1-&gt;4 linkage to terminal GlcNAc of a lactotriaosylceramide (Lc3Cer) acceptor to form a neolactotetraosylceramide. The protein is Beta-1,4-galactosyltransferase 4 of Homo sapiens (Human).